The primary structure comprises 343 residues: Ribosomal RNA small subunit methyltransferase C (343 aa).

It belongs to the methyltransferase superfamily. RsmC family. As to quaternary structure, monomer.

The protein localises to the cytoplasm. It catalyses the reaction guanosine(1207) in 16S rRNA + S-adenosyl-L-methionine = N(2)-methylguanosine(1207) in 16S rRNA + S-adenosyl-L-homocysteine + H(+). In terms of biological role, specifically methylates the guanine in position 1207 of 16S rRNA in the 30S particle. The chain is Ribosomal RNA small subunit methyltransferase C from Escherichia coli (strain K12 / DH10B).